A 1340-amino-acid chain; its full sequence is MHRDMYSSRGTGYGQQQYGSQSGYSQNLGSGYPGSSVSGGAEGGSQISLSSRHPSITGAPQETDIGGGYRSHLSTAASHYGTQYGSVYGSTSLSSSQPLSTNGLGSSVLDNRSGYVPTLPDSPKFASGSYLSPSSHGYGQKTDDLYSDKLSGYIPVDRRQYGEQSSSYLGRELQNEPTRRYADPSNFARQTDLYDRIDQASLLRGEQLLKMQSLHTSSVDAGVNRQTDYLTERSSTVRHSDQEAMHYGGRLESDPHGLSVRNTSSYASQHTPSLLGAVPRRNLDDYIYPESSSNPGYGVSLPPGRDYGTGKGIHSAASLDLDYPGGMLARGTGAAPRVDDLRKGDRASYLREFDLREEERRREDQRARDKEREREREREHDRERERQRERERQRARDRERERILERREKERQGERERERKRALEIKRDRTPTARATSKDTKERTPVPKSISRDARSSSLRRDAHHREASIRRSSPIKPIRRDYVCKVLSSRLVDMERDYVTLDKRYPRLFVPSEFSKVVVNWPKQKLTLSMHTAVSFEHDYIEDGGADVKSTSTKPLALKTGGKSVWNAKMVLMSGLSRTALEDLASDKFFEDRIPHICNILKFAVLKKDHSFMAIGGSWDPTDGMDPSVDQSSLIQTMLRHSKDKLHLDLSNCRHWNPFLEIHYDRVGTDGVFSYKEITVLFVPDLSECLPSFDVWRTQWLAHRKALTERDRLLSQEVKKDTVEVTKDAEKKSPGDTSGTPTTGTKKTVKKIIKRVVKRPVNDGKATGMKGEKSDVPEHVAIPETTVPKEESTGTSSNKKIVKKVAETGDTSDPSAKANEQTPAKTIVKKKIIKRVAKRKVAEIDNKMDGDSKKDGDSDEKKVMEVGKKSSDSGSVEMKPTAESLEDVKDENASKTVDVKQETGSPDTKKKEGASSSSKKDTKTGEDKKAEKKNNSETMSEGKKIDRNNTDEKEVKEKVTEKEIKERGGKDESRIQVKDRKKCEEPPRAGFILQTKRNKDSKLRSLSASLDSLLDYTDKDLDESSFEISLFAESLYEMLQYQMGSRIFEFLKKLRVKIVRQRNQRKRHQEELSVKQNEAKSQDKRQKTAEHEDKEASVISESAPGKDDKETSGKETVDGSREIADKEAVAKTKETLGSKEVTVGEAVNMEVENQDEEDDDGDDDPEEDPEEDPEEDPEEDPEEDPEECEEMDVANTEQEEPAEEPQKKEENLEKTSGTVADPITEAETDNRKEERGPNDSKTEIKPKSETEKHGKQDGGTSDAAKREETVDKELLQAFRFFDRNQAGYVRVEDMRVTIHSLGKFLSHREVKELVQSALLESNTGRDDRILYNKLVRLSL.

6 disordered regions span residues 1-73, 161-185, 357-473, 723-750, 784-990, and 1063-1269; these read MHRD…RSHL, YGEQ…ADPS, EEER…IRRS, TVEV…KKTV, PETT…PPRA, and RNQR…KREE. A compositionally biased stretch (low complexity) spans 7-39; it reads SSRGTGYGQQQYGSQSGYSQNLGSGYPGSSVSG. Positions 46-60 are enriched in polar residues; it reads QISLSSRHPSITGAP. Basic and acidic residues-rich tracts occupy residues 173 to 182, 357 to 470, and 723 to 735; these read LQNEPTRRYA, EEER…EASI, and TVEV…KKSP. Residues 355-426 are a coiled coil; sequence LREEERRRED…RERKRALEIK (72 aa). A compositionally biased stretch (polar residues) spans 810–824; the sequence is GDTSDPSAKANEQTP. Positions 828–840 are enriched in basic residues; that stretch reads IVKKKIIKRVAKR. 4 stretches are compositionally biased toward basic and acidic residues: residues 841 to 872, 887 to 988, 1069 to 1097, and 1105 to 1138; these read KVAE…KKSS, EDVK…EEPP, HQEE…DKEA, and PGKD…ETLG. The stretch at 1052 to 1086 forms a coiled coil; the sequence is LKKLRVKIVRQRNQRKRHQEELSVKQNEAKSQDKR. A compositionally biased stretch (acidic residues) spans 1153–1204; it reads ENQDEEDDDGDDDPEEDPEEDPEEDPEEDPEEDPEECEEMDVANTEQEEPAE. Composition is skewed to basic and acidic residues over residues 1205–1214 and 1229–1257; these read EPQKKEENLE and TDNR…HGKQ. One can recognise an EF-hand domain in the interval 1270-1305; that stretch reads TVDKELLQAFRFFDRNQAGYVRVEDMRVTIHSLGKF.

As to quaternary structure, interacts with BHLH148/RITF1. As to expression, expressed ubiquitously at high levels, including in guard cells.

It is found in the nucleus. Its function is as follows. Required for salt tolerance and sodium (Na) homeostasis after salt stress. Together with BHLH148/RITF1, regulates the transcription of several genes involved in the detoxification of reactive oxygen species (ROS) generated by salt (NaCl) stress. Binds calcium. This is Protein SHORT ROOT IN SALT MEDIUM 1 from Arabidopsis thaliana (Mouse-ear cress).